A 346-amino-acid polypeptide reads, in one-letter code: Phosphoribosylformylglycinamidine cyclo-ligase (346 aa).

It belongs to the AIR synthase family.

It localises to the cytoplasm. It carries out the reaction 2-formamido-N(1)-(5-O-phospho-beta-D-ribosyl)acetamidine + ATP = 5-amino-1-(5-phospho-beta-D-ribosyl)imidazole + ADP + phosphate + H(+). The protein operates within purine metabolism; IMP biosynthesis via de novo pathway; 5-amino-1-(5-phospho-D-ribosyl)imidazole from N(2)-formyl-N(1)-(5-phospho-D-ribosyl)glycinamide: step 2/2. This Vibrio vulnificus (strain YJ016) protein is Phosphoribosylformylglycinamidine cyclo-ligase.